A 509-amino-acid polypeptide reads, in one-letter code: Poly(A) RNA polymerase GLD2-B (509 aa).

The segment at 88-125 (PGSPPSSFQNRKRRSDEGNSPYDVKRQRFQSPQEQTVN) is disordered. Residues 116 to 125 (FQSPQEQTVN) show a composition bias toward polar residues. 2 residues coordinate Mg(2+): Asp240 and Asp242. The PAP-associated domain maps to 409–462 (LGDLLLGFLKYFAVEFDWSKDIISLREAKALPRTDDYEWRNKYICVEEPFDGSN).

Belongs to the DNA polymerase type-B-like family. GLD2 subfamily. Component of a complex at least composed of cpeb1, cpsf1, tent2/gld2, pabpc1/ePAB, parn and sympk. Following oocyte maturation, parn is expelled from the complex. Interacts with rbfox2. Interacts with sympk. It depends on Mg(2+) as a cofactor. Requires Mn(2+) as cofactor.

It localises to the cytoplasm. The catalysed reaction is RNA(n) + ATP = RNA(n)-3'-adenine ribonucleotide + diphosphate. Cytoplasmic poly(A) RNA polymerase that adds successive AMP monomers to the 3'-end of specific RNAs, forming a poly(A) tail. In contrast to the canonical nuclear poly(A) RNA polymerase, it only adds poly(A) to selected cytoplasmic mRNAs during oocyte maturation. Plays a central role during oocyte maturation by mediating polyadenylation of dormant mRNAs, which contain 5'AAUAAA-3' sequence in their 3'-UTR. In immature oocytes, polyadenylation of poly(A) tails is counteracted by the ribonuclease parn. During maturation parn is excluded from the ribonucleoprotein complex, allowing poly(A) elongation and activation of mRNAs. May not play a role in replication-dependent histone mRNA degradation. This chain is Poly(A) RNA polymerase GLD2-B, found in Xenopus laevis (African clawed frog).